A 489-amino-acid polypeptide reads, in one-letter code: Glycogen synthase (489 aa).

Lysine 18 provides a ligand contact to ADP-alpha-D-glucose.

The protein belongs to the glycosyltransferase 1 family. Bacterial/plant glycogen synthase subfamily.

The catalysed reaction is [(1-&gt;4)-alpha-D-glucosyl](n) + ADP-alpha-D-glucose = [(1-&gt;4)-alpha-D-glucosyl](n+1) + ADP + H(+). The protein operates within glycan biosynthesis; glycogen biosynthesis. Its function is as follows. Synthesizes alpha-1,4-glucan chains using ADP-glucose. This Rhodopseudomonas palustris (strain BisB18) protein is Glycogen synthase.